Here is a 195-residue protein sequence, read N- to C-terminus: 3-isopropylmalate dehydratase small subunit (195 aa).

It belongs to the LeuD family. LeuD type 1 subfamily. Heterodimer of LeuC and LeuD.

It carries out the reaction (2R,3S)-3-isopropylmalate = (2S)-2-isopropylmalate. It functions in the pathway amino-acid biosynthesis; L-leucine biosynthesis; L-leucine from 3-methyl-2-oxobutanoate: step 2/4. Its function is as follows. Catalyzes the isomerization between 2-isopropylmalate and 3-isopropylmalate, via the formation of 2-isopropylmaleate. The polypeptide is 3-isopropylmalate dehydratase small subunit (Rubrobacter xylanophilus (strain DSM 9941 / JCM 11954 / NBRC 16129 / PRD-1)).